Consider the following 812-residue polypeptide: Plasminogen (812 aa).

A signal peptide spans 1–19 (MDHKEVILLFLLLLKPGQG). The region spanning 20–98 (DSLDGYISTQ…RDVILFEKRV (79 aa)) is the PAN domain. Disulfide bonds link Cys49–Cys73, Cys53–Cys61, Cys103–Cys181, Cys124–Cys164, Cys152–Cys176, Cys185–Cys262, Cys188–Cys316, Cys206–Cys245, Cys234–Cys257, Cys275–Cys352, Cys296–Cys335, Cys324–Cys347, Cys377–Cys454, Cys398–Cys437, Cys426–Cys449, Cys481–Cys560, Cys502–Cys543, Cys531–Cys555, Cys568–Cys687, Cys578–Cys586, and Cys609–Cys625. Kringle domains are found at residues 103–181 (CKTG…IPEC), 184–262 (ECMY…IPRC), 275–352 (CLKG…IPSC), 377–454 (CYQS…LKRC), and 481–560 (CMYG…IPLC). The Peptidase S1 domain maps to 582–810 (VVGGCVANPH…FVDWIEREMR (229 aa)). A Phosphoserine modification is found at Ser598. Residues His624 and Asp667 each act as charge relay system in the active site. Ser690 carries the post-translational modification Phosphoserine. 3 cysteine pairs are disulfide-bonded: Cys701-Cys768, Cys731-Cys747, and Cys758-Cys786. Catalysis depends on Ser762, which acts as the Charge relay system.

Belongs to the peptidase S1 family. Plasminogen subfamily. As to quaternary structure, interacts (both mature PLG and the angiostatin peptide) with AMOT and CSPG4. Interacts (via the Kringle domains) with HRG; the interaction tethers PLG to the cell surface and enhances its activation. Interacts (via Kringle 4 domain) with ADA; the interaction stimulates PLG activation when in complex with DPP4. Angiostatin: Interacts with ATP5F1A; the interaction inhibits most of the angiogenic effects of angiostatin. In terms of processing, in the presence of the inhibitor, the activation involves only cleavage after Arg-581, yielding two chains held together by two disulfide bonds. In the absence of the inhibitor, the activation involves additionally the removal of the activation peptide.

The protein localises to the secreted. The catalysed reaction is Preferential cleavage: Lys-|-Xaa &gt; Arg-|-Xaa, higher selectivity than trypsin. Converts fibrin into soluble products.. Its activity is regulated as follows. Converted into plasmin by plasminogen activators, both plasminogen and its activator being bound to fibrin. Cannot be activated with streptokinase. In terms of biological role, plasmin dissolves the fibrin of blood clots and acts as a proteolytic factor in a variety of other processes including embryonic development, tissue remodeling, tumor invasion, and inflammation. In ovulation, weakens the walls of the Graafian follicle. It activates the urokinase-type plasminogen activator, collagenases and several complement zymogens, such as C1, C4 and C5. Cleavage of fibronectin and laminin leads to cell detachment and apoptosis. Also cleaves fibrin, thrombospondin and von Willebrand factor. Its role in tissue remodeling and tumor invasion may be modulated by CSPG4. Binds to cells. Angiostatin is an angiogenesis inhibitor that blocks neovascularization and growth of experimental primary and metastatic tumors in vivo. The chain is Plasminogen (Plg) from Mus musculus (Mouse).